A 198-amino-acid chain; its full sequence is Mediator of RNA polymerase II transcription subunit 22 (198 aa).

Positions 159–198 (WGSPEMTSDPSHANHEVSDHLGSQESMQRHRNGSGTSEQS) are disordered.

The protein belongs to the Mediator complex subunit 22 family. As to quaternary structure, component of the Mediator complex.

Its subcellular location is the nucleus. Its function is as follows. Component of the Mediator complex, a coactivator involved in the regulated transcription of nearly all RNA polymerase II-dependent genes. Mediator functions as a bridge to convey information from gene-specific regulatory proteins to the basal RNA polymerase II transcription machinery. Mediator is recruited to promoters by direct interactions with regulatory proteins and serves as a scaffold for the assembly of a functional preinitiation complex with RNA polymerase II and the general transcription factors. The protein is Mediator of RNA polymerase II transcription subunit 22 (med22) of Danio rerio (Zebrafish).